The chain runs to 467 residues: Gamma-aminobutyric acid receptor subunit rho-3 (467 aa).

A signal peptide spans 1–24; it reads MVLAFQLVSFTYIWIILKPNVCAA. Over 25 to 266 the chain is Extracellular; the sequence is SNIKMTHQRC…LFINFVLRRH (242 aa). 4-aminobutanoate is bound by residues arginine 111 and serine 175. A disulfide bridge connects residues cysteine 184 and cysteine 198. Glutamate 203 contributes to the 4-aminobutanoate binding site. Asparagine 220 is a glycosylation site (N-linked (GlcNAc...) asparagine). The helical transmembrane segment at 267–287 threads the bilayer; it reads VFFFVLQTYFPAILMVMLSWV. Residues 288–299 lie on the Cytoplasmic side of the membrane; sequence SFWIDRRAVPAR. A helical transmembrane segment spans residues 300-320; the sequence is VSLGITTVLTMSTIITAVSAS. Residues 321–331 are Extracellular-facing; the sequence is MPQVSYLKAVD. A helical membrane pass occupies residues 332 to 352; that stretch reads VYLWVSSLFVFLSVIEYAAVN. The segment at 347–448 is interaction with SQSTM1; the sequence is EYAAVNYLTT…NNHVIDTYSR (102 aa). Residues 353–446 lie on the Cytoplasmic side of the membrane; that stretch reads YLTTVEERKQ…LENNHVIDTY (94 aa). The chain crosses the membrane as a helical span at residues 447 to 467; it reads SRILFPIVYILFNLFYWGVYV.

Belongs to the ligand-gated ion channel (TC 1.A.9) family. Gamma-aminobutyric acid receptor (TC 1.A.9.5) subfamily. GABRR3 sub-subfamily. Three rho subunits (rho-1/GBRR1, rho-2/GBRR2 and rho-3/GBRR3) coassemble either to form functional homopentamers or heteropentamers. Forms a ternary complex with SQSTM1 and PRKCZ.

The protein localises to the postsynaptic cell membrane. It localises to the cell membrane. It carries out the reaction chloride(in) = chloride(out). Its activity is regulated as follows. Inhibited by TPMPA, a rho-specific antagonist, when forming a homopentamer. Functionally, rho subunit of the pentameric ligand-gated chloride channels responsible for mediating the effects of gamma-aminobutyric acid (GABA), the major inhibitory neurotransmitter in the brain. Rho-containing GABA-gated chloride channels are a subclass of GABA(A) receptors (GABAARs) entirely composed of rho subunits, where GABA molecules bind at the rho intersubunit interfaces. When activated by GABA, rho-GABAARs selectively allow the flow of chloride anions across the cell membrane down their electrochemical gradient. The polypeptide is Gamma-aminobutyric acid receptor subunit rho-3 (Homo sapiens (Human)).